We begin with the raw amino-acid sequence, 437 residues long: tRNA-2-methylthio-N(6)-dimethylallyladenosine synthase (437 aa).

An MTTase N-terminal domain is found at 5–121 (KKLYIKTYGC…LPELTARAAT (117 aa)). 6 residues coordinate [4Fe-4S] cluster: C14, C50, C84, C159, C163, and C166. The Radical SAM core domain maps to 145–371 (AKRGPTAFLT…QALLTRQQRA (227 aa)). One can recognise a TRAM domain in the interval 374–436 (DAKVGTTARV…ANSLRGVLIA (63 aa)).

It belongs to the methylthiotransferase family. MiaB subfamily. In terms of assembly, monomer. Requires [4Fe-4S] cluster as cofactor.

It localises to the cytoplasm. It catalyses the reaction N(6)-dimethylallyladenosine(37) in tRNA + (sulfur carrier)-SH + AH2 + 2 S-adenosyl-L-methionine = 2-methylsulfanyl-N(6)-dimethylallyladenosine(37) in tRNA + (sulfur carrier)-H + 5'-deoxyadenosine + L-methionine + A + S-adenosyl-L-homocysteine + 2 H(+). In terms of biological role, catalyzes the methylthiolation of N6-(dimethylallyl)adenosine (i(6)A), leading to the formation of 2-methylthio-N6-(dimethylallyl)adenosine (ms(2)i(6)A) at position 37 in tRNAs that read codons beginning with uridine. The polypeptide is tRNA-2-methylthio-N(6)-dimethylallyladenosine synthase (Dinoroseobacter shibae (strain DSM 16493 / NCIMB 14021 / DFL 12)).